The chain runs to 650 residues: Pentatricopeptide repeat-containing protein At2g41080 (650 aa).

PPR repeat units lie at residues 43 to 77 (NTSL…GFSS), 78 to 112 (DKFI…NYMS), 114 to 139 (NILI…MPDR), 140 to 174 (KLTT…GFSP), 175 to 209 (DEYT…GLEL), 210 to 240 (DLVV…MPVR), 241 to 275 (NLVA…GCRP), 276 to 310 (NKIT…GASS), 311 to 341 (VVAV…REDE), 342 to 372 (DEVM…MAEQ), 378 to 413 (NEVA…GFKP), and 414 to 444 (GLKH…MPIK). The type E motif stretch occupies residues 449–524 (IWKTLLSACN…EAGISWFEHK (76 aa)). The tract at residues 525–555 (GEVHQFKMGDRSQSKSKEIYSYLKELTLEMK) is type E(+) motif. The type DYW motif stretch occupies residues 556-650 (LKGYKPDTAS…NGKCSCGDYW (95 aa)).

It belongs to the PPR family. PCMP-H subfamily.

The sequence is that of Pentatricopeptide repeat-containing protein At2g41080 (PCMP-H29) from Arabidopsis thaliana (Mouse-ear cress).